A 147-amino-acid polypeptide reads, in one-letter code: Hemoglobin subunit epsilon (147 aa).

Residues 3-147 (HFTAEEKAAI…VAIALGHKYH (145 aa)) form the Globin domain. Phosphoserine is present on residues Ser14 and Ser51. 2 residues coordinate heme b: His64 and His93.

It belongs to the globin family. Heterotetramer of two alpha chains and two epsilon chains in early embryonic hemoglobin Gower-2; two zeta chains and two epsilon chains in early embryonic hemoglobin Gower-1. Red blood cells.

Its function is as follows. The epsilon chain is a beta-type chain of early mammalian embryonic hemoglobin. This chain is Hemoglobin subunit epsilon (HBE1), found in Lagothrix lagotricha (Brown woolly monkey).